Consider the following 92-residue polypeptide: LYR motif-containing protein 4 homolog (92 aa).

Positions 48–68 (AEIDRQMAEGQQNLELIRRQV) form a coiled coil.

This sequence belongs to the complex I LYR family. Component of the mitochondrial core iron-sulfur cluster (ISC) assembly complex at least composed of the cysteine desulfurase Nfs1, the scaffold protein IscU, the accessory protein bcn92/Isd11/Lyrm4, and probably fh/frataxin. Interacts with Nfs1.

Its subcellular location is the mitochondrion. Stabilizing factor of the core iron-sulfur cluster (ISC) assembly complex that regulates the stability and cysteine desulfurase activity of Nfs1 and participates in the [2Fe-2S] clusters assembly on the scaffolding protein IscU. The sequence is that of LYR motif-containing protein 4 homolog from Drosophila melanogaster (Fruit fly).